A 154-amino-acid chain; its full sequence is Methylglyoxal synthase (154 aa).

One can recognise an MGS-like domain in the interval 6–154 (SPLPANKAIA…AYMARRAQGN (149 aa)). Substrate-binding positions include His-19, Lys-23, 45-48 (TGTT), and 65-66 (SG). Asp-71 acts as the Proton donor/acceptor in catalysis. A substrate-binding site is contributed by His-98.

Belongs to the methylglyoxal synthase family.

The enzyme catalyses dihydroxyacetone phosphate = methylglyoxal + phosphate. In terms of biological role, catalyzes the formation of methylglyoxal from dihydroxyacetone phosphate. The sequence is that of Methylglyoxal synthase from Cellvibrio japonicus (strain Ueda107) (Pseudomonas fluorescens subsp. cellulosa).